A 318-amino-acid polypeptide reads, in one-letter code: Very-long-chain 3-oxoacyl-CoA reductase-A (318 aa).

Residues 15-35 form a helical membrane-spanning segment; the sequence is FWYLGVLAAAWWGLRAACCLL. Residue 54–83 participates in NADP(+) binding; the sequence is GKWAVVTGATDGIGKAYAEELARRGMSIVL. The next 2 membrane-spanning stretches (helical) occupy residues 187-207 and 281-301; these read GVILNISSASGMYPVPLLTVY and AIMGWISTSLVPVSVAISMGM. S194 contributes to the substrate binding site. Y207 serves as the catalytic Proton acceptor.

This sequence belongs to the short-chain dehydrogenases/reductases (SDR) family. 17-beta-HSD 3 subfamily.

The protein resides in the endoplasmic reticulum membrane. It carries out the reaction a very-long-chain (3R)-3-hydroxyacyl-CoA + NADP(+) = a very-long-chain 3-oxoacyl-CoA + NADPH + H(+). It catalyses the reaction 17beta-estradiol + NAD(+) = estrone + NADH + H(+). The catalysed reaction is 17beta-estradiol + NADP(+) = estrone + NADPH + H(+). Its pathway is lipid metabolism; fatty acid biosynthesis. It functions in the pathway steroid biosynthesis; estrogen biosynthesis. In terms of biological role, catalyzes the second of the four reactions of the long-chain fatty acids elongation cycle. This endoplasmic reticulum-bound enzymatic process, allows the addition of two carbons to the chain of long- and very long-chain fatty acids/VLCFAs per cycle. This enzyme has a 3-ketoacyl-CoA reductase activity, reducing 3-ketoacyl-CoA to 3-hydroxyacyl-CoA, within each cycle of fatty acid elongation. Thereby, it may participate in the production of VLCFAs of different chain lengths that are involved in multiple biological processes as precursors of membrane lipids and lipid mediators. May also catalyze the transformation of estrone (E1) into estradiol (E2) and play a role in estrogen formation. This chain is Very-long-chain 3-oxoacyl-CoA reductase-A (hsd17b12-a), found in Xenopus laevis (African clawed frog).